The chain runs to 269 residues: Monofunctional glycosyltransferase (269 aa).

The helical transmembrane segment at Ile46 to Thr66 threads the bilayer.

The protein belongs to the glycosyltransferase 51 family.

It is found in the cell membrane. It carries out the reaction [GlcNAc-(1-&gt;4)-Mur2Ac(oyl-L-Ala-gamma-D-Glu-L-Lys-D-Ala-D-Ala)](n)-di-trans,octa-cis-undecaprenyl diphosphate + beta-D-GlcNAc-(1-&gt;4)-Mur2Ac(oyl-L-Ala-gamma-D-Glu-L-Lys-D-Ala-D-Ala)-di-trans,octa-cis-undecaprenyl diphosphate = [GlcNAc-(1-&gt;4)-Mur2Ac(oyl-L-Ala-gamma-D-Glu-L-Lys-D-Ala-D-Ala)](n+1)-di-trans,octa-cis-undecaprenyl diphosphate + di-trans,octa-cis-undecaprenyl diphosphate + H(+). Its pathway is cell wall biogenesis; peptidoglycan biosynthesis. Peptidoglycan polymerase that catalyzes glycan chain elongation using lipid-linked disaccharide-pentapeptide as the substrate. In Staphylococcus aureus (strain JH1), this protein is Monofunctional glycosyltransferase.